A 393-amino-acid polypeptide reads, in one-letter code: Nuclear hormone receptor family member nhr-90 (393 aa).

Residues 6–79 (LQTCKICGAE…AGMKIEYFQH (74 aa)) constitute a DNA-binding region (nuclear receptor). The NR C4-type zinc-finger motif lies at 9–30 (CKICGAENTRGNHFGVQCCRAC). Residues 47 to 62 (CLSVHCGEAARFCKPC) form an NR C4-type; degenerate zinc finger. Positions 121-388 (DLNSLVGKAS…FSHPEMFIDT (268 aa)) constitute an NR LBD domain.

The protein belongs to the nuclear hormone receptor family.

Its subcellular location is the nucleus. Its function is as follows. Orphan nuclear receptor. In Caenorhabditis elegans, this protein is Nuclear hormone receptor family member nhr-90 (nhr-90).